Reading from the N-terminus, the 451-residue chain is Tryptophan--tRNA ligase (451 aa).

ATP-binding positions include 10–12 (TTT) and 18–19 (GN). The 'HIGH' region motif lies at 11–19 (TTGTPHLGN). An L-tryptophan-binding site is contributed by D143. Residues 155-157 (GRD), L195, and 202-206 (KMSKS) each bind ATP. The 'KMSKS' region signature appears at 202–206 (KMSKS).

The protein belongs to the class-I aminoacyl-tRNA synthetase family. Homodimer.

The protein localises to the cytoplasm. It carries out the reaction tRNA(Trp) + L-tryptophan + ATP = L-tryptophyl-tRNA(Trp) + AMP + diphosphate + H(+). Catalyzes the attachment of tryptophan to tRNA(Trp). The polypeptide is Tryptophan--tRNA ligase (Bordetella bronchiseptica (strain ATCC BAA-588 / NCTC 13252 / RB50) (Alcaligenes bronchisepticus)).